The sequence spans 177 residues: uncharacterized protein (177 aa).

It belongs to the flavoredoxin family. The cofactor is FMN.

This is an uncharacterized protein from Archaeoglobus fulgidus (strain ATCC 49558 / DSM 4304 / JCM 9628 / NBRC 100126 / VC-16).